The chain runs to 159 residues: Protein-export protein SecB (159 aa).

It belongs to the SecB family. As to quaternary structure, homotetramer, a dimer of dimers. One homotetramer interacts with 1 SecA dimer.

It localises to the cytoplasm. One of the proteins required for the normal export of preproteins out of the cell cytoplasm. It is a molecular chaperone that binds to a subset of precursor proteins, maintaining them in a translocation-competent state. It also specifically binds to its receptor SecA. The sequence is that of Protein-export protein SecB from Nitrosospira multiformis (strain ATCC 25196 / NCIMB 11849 / C 71).